The sequence spans 85 residues: Small ribosomal subunit protein uS17 (85 aa).

The protein belongs to the universal ribosomal protein uS17 family. As to quaternary structure, part of the 30S ribosomal subunit.

One of the primary rRNA binding proteins, it binds specifically to the 5'-end of 16S ribosomal RNA. In Actinobacillus succinogenes (strain ATCC 55618 / DSM 22257 / CCUG 43843 / 130Z), this protein is Small ribosomal subunit protein uS17.